Here is a 338-residue protein sequence, read N- to C-terminus: MIRVAINGYGRIGRSILRALYESGKRQQIQIVAINELAKPEAIIHLTQYDTTHGRFQPRVKLVDGQMQIGDDTIKIFHEPDPAKLPWRELDIDIVYEATGAILDRQSCEAHIHAGAKQVLISHPSSADVDGTIVYGVNHDLLRAEHTVVSNASCTTNCIVPVIDVLDKHFGVKSGAITTIHSAMNDQQVIDAYHDDLRRTRAAGQSIIPVDTKLARGIERILPHMKDKFEAISVRVPTINVTAIDLSVTLDKTVDIATVNQVLELAANGRFNGILGYTDEPLVSCDFNHDPRSSIVDGTQTRVSAGQLVKLLLWCDNEWGFANRMLDTSLAMIAAKQS.

Residue 11 to 12 coordinates NAD(+); that stretch reads RI. Substrate contacts are provided by residues 153 to 155, Arg-199, 212 to 213, and Arg-235; these read SCT and TK. Catalysis depends on Cys-154, which acts as the Nucleophile. Asn-317 is an NAD(+) binding site.

It belongs to the glyceraldehyde-3-phosphate dehydrogenase family. Epd subfamily. Homotetramer.

The protein localises to the cytoplasm. It catalyses the reaction D-erythrose 4-phosphate + NAD(+) + H2O = 4-phospho-D-erythronate + NADH + 2 H(+). It participates in cofactor biosynthesis; pyridoxine 5'-phosphate biosynthesis; pyridoxine 5'-phosphate from D-erythrose 4-phosphate: step 1/5. Its function is as follows. Catalyzes the NAD-dependent conversion of D-erythrose 4-phosphate to 4-phosphoerythronate. This is D-erythrose-4-phosphate dehydrogenase from Shewanella oneidensis (strain ATCC 700550 / JCM 31522 / CIP 106686 / LMG 19005 / NCIMB 14063 / MR-1).